A 255-amino-acid chain; its full sequence is MPALRTLLPHLGLFLCLALCFSPSFSLSNNESCILYDQVYPSDNLINASAEEVSGENTTYTVTVPVNDSVSAVILKAEKDNKPVGTWSGAYEKCNNSVVYNLTSLNNSAFQTNWTVPSSEDVTKVNLTIFIVINRTATVSSVKLEPKETSSLASTPESQTSAMTTAMTSAMTTAKTTAVATNSSTDVTSDNSTAVTTANSTAVTTANSTAVTTAKTTTMTTATTTAKSLAIRTLCSPLAGALHILLVFLISKLLF.

A signal peptide spans 1–26 (MPALRTLLPHLGLFLCLALCFSPSFS). N-linked (GlcNAc...) asparagine glycosylation is found at Asn57, Asn67, and Asn126. The GPI-anchor amidated serine moiety is linked to residue Ser236. The propeptide at 237–255 (PLAGALHILLVFLISKLLF) is removed in mature form.

N-glycosylated. Post-translationally, GPI-anchored.

It localises to the apical cell membrane. Functionally, modulates leading keratinocyte migration and cellular adhesion to matrix proteins during a wound-healing response and promotes wound repair. May play a role during trichilemmal differentiation of the hair follicle. This chain is Placenta-expressed transcript 1 protein (Plet1), found in Rattus norvegicus (Rat).